Here is a 523-residue protein sequence, read N- to C-terminus: MRAMHPLLKEILTHPPSGQHECVHGWVRSKRETKRAVFISLSDGSCPDTLQVTVPLPECSASLSSGAQAEQIPNVRDAVLQGETLAQTLKRVTTGACIRAEGALVPSPGAGQALELRACNLTVLGEAPAETYPLQKKSHSFEFLRAHAHLRARTSTFAACARVRSALAGAVHRFFSERHFQYVHTPIITASDCEGAGELFRVTTFDPVRIAREAHAAGAAGNPYALTYADDFFGKAARLTVSGQLQGEAYALALTRIYTFGPTFRAENSNTSRHLSEFWMVEPEIAFARITDCMDVAEEFLAYLLRAALKDCAQDIAFLDERAAQHARSARGDTPLAARSTARTPPVRTPGQLTRMLEDVARAPATRLTYTEAIKLLENSGRSFEFPVRWGCDLQSEHECFLTEEVFHGPVIVYDYPKEIKAFYMKLNADGTTVRSMDLLVPGLGEIMGGSEREEQFEVLCARIRASGFDPHDYRWYTDLRRFGTAPHAGFGLGFERLLQYVTGLGNIRDVIPFPRTPRTADF.

The disordered stretch occupies residues 329–350; it reads SARGDTPLAARSTARTPPVRTP.

This sequence belongs to the class-II aminoacyl-tRNA synthetase family. Homodimer.

It localises to the cytoplasm. It catalyses the reaction tRNA(Asn) + L-asparagine + ATP = L-asparaginyl-tRNA(Asn) + AMP + diphosphate + H(+). The polypeptide is Asparagine--tRNA ligase (Treponema pallidum (strain Nichols)).